Reading from the N-terminus, the 388-residue chain is MPNFQKFETFDKLTTVPCPYAPDCGGCQHIGVPYGHQAQNKINDLSGLFTAAEVAFPKPLKVLSAGPAHLRDRLDFSLQDGRLGLYRTDRHEILDIEVCAQLSPALQGWLSEFRKIQWPFKRGSFRLRVGPEGQRGLWIDLANVDIKTLLDEQNILRSLQQQAFVEIGQRRKVPVWTGNEFKLRDPEHHVWFQSWMNDIPVNLYCQVASFTQPSHTANKIICDVIYDWVKRYKAQRLIEFGSGIGNLTFPALAGAESVLACEIDELSLQGLERSLNELPASMSHLKDRVTIYRRDFQKKLTQDFSQFDGVLANPPRSGLMGFLNPLKSLAPEQRPEFFIYMSCYPESMARDLVTLQECGYRMQEVYIVDQFPQTDHYEVLGLLQREKA.

The [4Fe-4S] cluster site is built by cysteine 18, cysteine 24, cysteine 27, and cysteine 99. S-adenosyl-L-methionine is bound by residues glutamine 212, glutamate 262, and asparagine 313. Residue cysteine 343 is the Nucleophile of the active site.

Belongs to the class I-like SAM-binding methyltransferase superfamily. RNA M5U methyltransferase family.

This is an uncharacterized protein from Bdellovibrio bacteriovorus (strain ATCC 15356 / DSM 50701 / NCIMB 9529 / HD100).